Reading from the N-terminus, the 305-residue chain is Porphobilinogen deaminase (305 aa).

The residue at position 240 (cysteine 240) is an S-(dipyrrolylmethanemethyl)cysteine.

The protein belongs to the HMBS family. As to quaternary structure, monomer. Dipyrromethane is required as a cofactor.

The enzyme catalyses 4 porphobilinogen + H2O = hydroxymethylbilane + 4 NH4(+). It functions in the pathway porphyrin-containing compound metabolism; protoporphyrin-IX biosynthesis; coproporphyrinogen-III from 5-aminolevulinate: step 2/4. Functionally, tetrapolymerization of the monopyrrole PBG into the hydroxymethylbilane pre-uroporphyrinogen in several discrete steps. The protein is Porphobilinogen deaminase (hemC) of Xylella fastidiosa (strain 9a5c).